A 404-amino-acid chain; its full sequence is Putative aspartate aminotransferase, cytoplasmic 2 (404 aa).

Lysine 249 bears the N6-(pyridoxal phosphate)lysine mark.

It belongs to the class-I pyridoxal-phosphate-dependent aminotransferase family. Homodimer. Pyridoxal 5'-phosphate serves as cofactor.

The protein resides in the cytoplasm. The catalysed reaction is L-aspartate + 2-oxoglutarate = oxaloacetate + L-glutamate. The chain is Putative aspartate aminotransferase, cytoplasmic 2 (Got1l1) from Mus musculus (Mouse).